Reading from the N-terminus, the 182-residue chain is Large ribosomal subunit protein uL16 (182 aa).

Belongs to the universal ribosomal protein uL16 family.

This Thermococcus onnurineus (strain NA1) protein is Large ribosomal subunit protein uL16.